The chain runs to 449 residues: Kynurenine 3-monooxygenase (449 aa).

This sequence belongs to the aromatic-ring hydroxylase family. KMO subfamily. FAD is required as a cofactor.

The enzyme catalyses L-kynurenine + NADPH + O2 + H(+) = 3-hydroxy-L-kynurenine + NADP(+) + H2O. It participates in cofactor biosynthesis; NAD(+) biosynthesis; quinolinate from L-kynurenine: step 1/3. Catalyzes the hydroxylation of L-kynurenine (L-Kyn) to form 3-hydroxy-L-kynurenine (L-3OHKyn). Required for synthesis of quinolinic acid. The protein is Kynurenine 3-monooxygenase of Cytophaga hutchinsonii (strain ATCC 33406 / DSM 1761 / CIP 103989 / NBRC 15051 / NCIMB 9469 / D465).